Reading from the N-terminus, the 186-residue chain is Probable chorismate pyruvate-lyase (186 aa).

Residues R80, L118, and E170 each contribute to the substrate site.

It belongs to the UbiC family.

Its subcellular location is the cytoplasm. The catalysed reaction is chorismate = 4-hydroxybenzoate + pyruvate. Its pathway is cofactor biosynthesis; ubiquinone biosynthesis. Its function is as follows. Removes the pyruvyl group from chorismate, with concomitant aromatization of the ring, to provide 4-hydroxybenzoate (4HB) for the ubiquinone pathway. This chain is Probable chorismate pyruvate-lyase, found in Pseudomonas savastanoi pv. phaseolicola (strain 1448A / Race 6) (Pseudomonas syringae pv. phaseolicola (strain 1448A / Race 6)).